The sequence spans 761 residues: RNA-binding protein mde7 (761 aa).

Composition is skewed to polar residues over residues 31–46 (PNHSSLSEQQSTNSLL), 58–83 (SRNSTTNPLNLLYTQTQQPARSTTPF), and 99–110 (SRNNSYLQGTAE). 2 disordered regions span residues 31-110 (PNHS…GTAE) and 188-213 (HYFDDTDKSVHSKSSSGSNSLSEASN). A compositionally biased stretch (basic and acidic residues) spans 188-197 (HYFDDTDKSV). A compositionally biased stretch (low complexity) spans 199–211 (SKSSSGSNSLSEA). Positions 223 to 289 (IVGGLPDDFD…SSTNNFTIIQ (67 aa)) constitute an RRM 1 domain. A compositionally biased stretch (polar residues) spans 442-466 (ESNSLSNQPNNFAQTSFDYQPNHPN). Residues 442 to 468 (ESNSLSNQPNNFAQTSFDYQPNHPNAI) are disordered. Residues 602–679 (NTIYVGNLSN…GGIRLSYSKN (78 aa)) form the RRM 2 domain.

The sequence is that of RNA-binding protein mde7 (mde7) from Schizosaccharomyces pombe (strain 972 / ATCC 24843) (Fission yeast).